A 275-amino-acid polypeptide reads, in one-letter code: Formamidopyrimidine-DNA glycosylase (275 aa).

Pro-2 (schiff-base intermediate with DNA) is an active-site residue. The active-site Proton donor is Glu-3. The active-site Proton donor; for beta-elimination activity is Lys-58. 3 residues coordinate DNA: His-91, Arg-109, and Arg-154. The FPG-type zinc-finger motif lies at 240 to 274 (AVYERAGLPCRVCGAPIRRLVQGQRATYFCPSCQK). Arg-264 acts as the Proton donor; for delta-elimination activity in catalysis.

This sequence belongs to the FPG family. In terms of assembly, monomer. Zn(2+) is required as a cofactor.

The enzyme catalyses Hydrolysis of DNA containing ring-opened 7-methylguanine residues, releasing 2,6-diamino-4-hydroxy-5-(N-methyl)formamidopyrimidine.. The catalysed reaction is 2'-deoxyribonucleotide-(2'-deoxyribose 5'-phosphate)-2'-deoxyribonucleotide-DNA = a 3'-end 2'-deoxyribonucleotide-(2,3-dehydro-2,3-deoxyribose 5'-phosphate)-DNA + a 5'-end 5'-phospho-2'-deoxyribonucleoside-DNA + H(+). Its function is as follows. Involved in base excision repair of DNA damaged by oxidation or by mutagenic agents. Acts as a DNA glycosylase that recognizes and removes damaged bases. Has a preference for oxidized purines, such as 7,8-dihydro-8-oxoguanine (8-oxoG). Has AP (apurinic/apyrimidinic) lyase activity and introduces nicks in the DNA strand. Cleaves the DNA backbone by beta-delta elimination to generate a single-strand break at the site of the removed base with both 3'- and 5'-phosphates. This is Formamidopyrimidine-DNA glycosylase from Bordetella parapertussis (strain 12822 / ATCC BAA-587 / NCTC 13253).